We begin with the raw amino-acid sequence, 536 residues long: ATP synthase subunit alpha, mitochondrial (536 aa).

The transit peptide at 1-24 (MFKNALRRAGVAAPRISRVAQRGY) directs the protein to the mitochondrion. Residue 195 to 202 (GDRQTGKT) participates in ATP binding.

F-type ATP synthases have 2 components, the catalytic core F(1) and the membrane-embedded component F(0), linked together by a central stalk and a peripheral stalk. The central stalk, also called rotor shaft, is often seen as part of F(1). The peripheral stalk is seen as part of F(0). F(0) contains the membrane channel next to the rotor. F-type ATP synthases form dimers but each monomer functions independently in ATP generation. The dimer consists of 17 different polypeptides: ATP1 (subunit alpha, 3 molecules per monomer, part of F(1)), ATP2 (subunit beta, 3 copies per monomer, part of F(1)), ATP3 (subunit gamma, part of the central stalk), ATP4 (subunit b, part of the peripheral stalk), ATP5/OSCP (subunit 5/OSCP, part of the peripheral stalk), ATP6 (subunit a, part of the peripheral stalk), ATP7 (subunit d, part of the peripheral stalk), ATP8 (subunit 8, part of the peripheral stalk), OLI1 (subunit c, part of the rotor, 10 molecules per monomer), ATP14 (subunit h, part of the peripheral stalk), ATP15 (subunit epsilon, part of the central stalk), ATP16 (subunit delta, part of the central stalk), ATP17 (subunit f, part of the peripheral stalk), ATP18 (subunit i/j, part of the peripheral stalk), ATP19 (subunit k, dimer-specific, at interface between monomers), ATP20 (subunit g, at interface between monomers), TIM11 (subunit e, at interface between monomers).

Its subcellular location is the mitochondrion inner membrane. In terms of biological role, mitochondrial membrane ATP synthase (F(1)F(0) ATP synthase or Complex V) produces ATP from ADP in the presence of a proton gradient across the membrane which is generated by electron transport complexes of the respiratory chain. F-type ATP synthases consist of two structural domains, F(1) - containing the extramembraneous catalytic core, and F(0) - containing the membrane proton channel, linked together by a central stalk and a peripheral stalk. During catalysis, ATP synthesis in the catalytic domain of F(1) is coupled via a rotary mechanism of the central stalk subunits to proton translocation. Subunits alpha/ATP1 and beta/ATP2 form the catalytic core in F(1). Rotation of the central stalk against the surrounding alpha/ATP1(3)beta/ATP2(3) subunits leads to hydrolysis of ATP in three separate catalytic sites on the beta/ATP2 subunits. Subunit alpha/ATP1 does not bear the catalytic high-affinity ATP-binding sites. The polypeptide is ATP synthase subunit alpha, mitochondrial (Yarrowia lipolytica (strain CLIB 122 / E 150) (Yeast)).